We begin with the raw amino-acid sequence, 277 residues long: 3-methyl-2-oxobutanoate hydroxymethyltransferase (277 aa).

The Mg(2+) site is built by Asp-43 and Asp-82. 3-methyl-2-oxobutanoate-binding positions include 43 to 44 (DS), Asp-82, and Lys-112. A Mg(2+)-binding site is contributed by Glu-114. The active-site Proton acceptor is the Glu-181.

This sequence belongs to the PanB family. Homodecamer; pentamer of dimers. It depends on Mg(2+) as a cofactor.

Its subcellular location is the cytoplasm. The enzyme catalyses 3-methyl-2-oxobutanoate + (6R)-5,10-methylene-5,6,7,8-tetrahydrofolate + H2O = 2-dehydropantoate + (6S)-5,6,7,8-tetrahydrofolate. The protein operates within cofactor biosynthesis; (R)-pantothenate biosynthesis; (R)-pantoate from 3-methyl-2-oxobutanoate: step 1/2. In terms of biological role, catalyzes the reversible reaction in which hydroxymethyl group from 5,10-methylenetetrahydrofolate is transferred onto alpha-ketoisovalerate to form ketopantoate. This Bacillus licheniformis (strain ATCC 14580 / DSM 13 / JCM 2505 / CCUG 7422 / NBRC 12200 / NCIMB 9375 / NCTC 10341 / NRRL NRS-1264 / Gibson 46) protein is 3-methyl-2-oxobutanoate hydroxymethyltransferase.